The primary structure comprises 291 residues: Homoserine kinase (291 aa).

Residue 80–90 (RPASGLGSSAA) coordinates ATP.

This sequence belongs to the GHMP kinase family. Homoserine kinase subfamily.

It localises to the cytoplasm. The enzyme catalyses L-homoserine + ATP = O-phospho-L-homoserine + ADP + H(+). The protein operates within amino-acid biosynthesis; L-threonine biosynthesis; L-threonine from L-aspartate: step 4/5. Its function is as follows. Catalyzes the ATP-dependent phosphorylation of L-homoserine to L-homoserine phosphate. The sequence is that of Homoserine kinase from Haloarcula marismortui (strain ATCC 43049 / DSM 3752 / JCM 8966 / VKM B-1809) (Halobacterium marismortui).